Reading from the N-terminus, the 113-residue chain is Large ribosomal subunit protein bL17 (113 aa).

Belongs to the bacterial ribosomal protein bL17 family. Part of the 50S ribosomal subunit. Contacts protein L32.

This Clostridium novyi (strain NT) protein is Large ribosomal subunit protein bL17.